An 861-amino-acid chain; its full sequence is Semaphorin-4D (861 aa).

The N-terminal stretch at 1-23 (MRMCAPVRGLFLALVVVLRTAVA) is a signal peptide. The 477-residue stretch at 24 to 500 (FAPVPRLTWE…SNSGVVQAPL (477 aa)) folds into the Sema domain. Over 24–733 (FAPVPRLTWE…TVYLKSSDNR (710 aa)) the chain is Extracellular. N-linked (GlcNAc...) asparagine glycosylation is found at N49 and N77. 2 disulfides stabilise this stretch: C97-C108 and C126-C135. N-linked (GlcNAc...) asparagine glycosylation is found at N139 and N191. Cystine bridges form between C257/C370 and C281/C326. Residues N379 and N419 are each glycosylated (N-linked (GlcNAc...) asparagine). The PSI domain occupies 502 to 551 (FCEKHGSCEDCVLARDPYCAWSPAIKACVTLHQEEASSRGWIQDMSGDTS). Cystine bridges form between C503/C520, C509/C553, C512/C529, and C576/C624. One can recognise an Ig-like C2-type domain in the interval 555-636 (DKSKESFNQH…EERVRNKTVS (82 aa)). N-linked (GlcNAc...) asparagine glycans are attached at residues N613 and N632. The disordered stretch occupies residues 649 to 709 (VPRTPPSPTS…KSSSGTSCEP (61 aa)). Over residues 657–681 (TSEDAQTEGSKITSKMPVASTQGSS) the composition is skewed to polar residues. Residues 734–754 (LLMSLLLFIFVLFLCLFSYNC) traverse the membrane as a helical segment. The Cytoplasmic portion of the chain corresponds to 755-861 (YKGYLPGQCL…KFADSDADGD (107 aa)). Phosphoserine occurs at positions 782 and 832. The interval 793–839 (VEPGSFSQQNGDHPKPALDTGYETEQDTITSKVPTDREDSQRIDELS) is disordered. Basic and acidic residues predominate over residues 826-839 (PTDREDSQRIDELS).

Belongs to the semaphorin family. Homodimer. Interacts with PLXNB1. Interacts with PLXNB2. Strongly expressed in lymphoid tissues, especially in the thymus, as well as in the nervous tissues. Expressed in neurons and glia in the developing hippocampus.

The protein localises to the cell membrane. Functionally, cell surface receptor for PLXNB1 and PLXNB2 that plays an important role in cell-cell signaling. Regulates GABAergic synapse development. Promotes the development of inhibitory synapses in a PLXNB1-dependent manner. Modulates the complexity and arborization of developing neurites in hippocampal neurons by activating PLXNB1 and interaction with PLXNB1 mediates activation of RHOA. Promotes the migration of cerebellar granule cells. Plays a role in the immune system; induces B-cells to aggregate and improves their viability (in vitro). Induces endothelial cell migration through the activation of PTK2B/PYK2, SRC, and the phosphatidylinositol 3-kinase-AKT pathway. This chain is Semaphorin-4D (Sema4d), found in Mus musculus (Mouse).